Reading from the N-terminus, the 123-residue chain is Beta-defensin 126 (123 aa).

The first 20 residues, 1-20 (MKSLLFTLAVFMLLAQLVSG), serve as a signal peptide directing secretion. The in vitro binds to LPS, mediates antimicrobial activity and inhibits LPS-mediated inflammation stretch occupies residues 21–63 (NLYVKRCLNDIGICKKTCKPEEVRSEHGWVMCGKRKACCVPAD). Cystine bridges form between C27–C58, C34–C52, and C38–C59.

This sequence belongs to the beta-defensin family. As to quaternary structure, homodimer or homooligomer; disulfide-linked. In terms of processing, O-glycosylated; glycans contain sialic acids alpha(2,3)-linked to galactose and N-acetylgalactosamine. The C-terminal O-glycosylation contributes substantially to the sperm glyocalyx. As to expression, high-level and epididymis-specific expression. Detected in epithelial cells lining the efferent ductules, initial segment, and cauda regions of the epididymis, but not on spermatozoa.

Its subcellular location is the secreted. Its function is as follows. Highly glycosylated atypical beta-defensin involved in several aspects of sperm function. Facilitates sperm transport in the female reproductive tract and contributes to sperm protection against immunodetection; both functions are probably implicating the negative surface charge provided by its O-linked oligosaccharides in the sperm glycocalyx. Involved in binding of sperm to oviductal epithelial cells to form a sperm reservoir until ovulation. Release from the sperm surface during capacitation and ovaluation by an elevation of oviductal fluid pH is unmasking other surface components and allows sperm to penetrate the cumulus matrix and bind to the zona pellucida of the oocyte. In vitro has antimicrobial activity and may inhibit LPS-mediated inflammation. The sequence is that of Beta-defensin 126 (DEFB126) from Macaca fascicularis (Crab-eating macaque).